The following is a 192-amino-acid chain: Leucine-rich repeat-containing protein 51 (192 aa).

LRR repeat units lie at residues 50-71, 80-101, and 103-124; these read MTQSLWLNNNVLTDLRDFNHAV, NLAWIDLSFNDLTSIDPVLTTF, and NLSVLYLHGNSIQRLGEVNKLA. The 39-residue stretch at 137 to 175 folds into the LRRCT domain; it reads NPIEEEKGYRQYVLCTLPHITTFDFSGVTKADRTTAEVW.

It is found in the cytoplasm. The sequence is that of Leucine-rich repeat-containing protein 51 from Bos taurus (Bovine).